A 159-amino-acid chain; its full sequence is Phosphopantetheine adenylyltransferase (159 aa).

Thr10 contacts substrate. ATP is bound by residues 10–11 (TF) and His18. Substrate-binding residues include Lys42, Met74, and Arg88. ATP is bound by residues 89-91 (GLR), Glu99, and 124-130 (WSFISSS).

Belongs to the bacterial CoaD family. As to quaternary structure, homohexamer. It depends on Mg(2+) as a cofactor.

The protein resides in the cytoplasm. It catalyses the reaction (R)-4'-phosphopantetheine + ATP + H(+) = 3'-dephospho-CoA + diphosphate. The protein operates within cofactor biosynthesis; coenzyme A biosynthesis; CoA from (R)-pantothenate: step 4/5. Reversibly transfers an adenylyl group from ATP to 4'-phosphopantetheine, yielding dephospho-CoA (dPCoA) and pyrophosphate. The protein is Phosphopantetheine adenylyltransferase of Pectobacterium carotovorum subsp. carotovorum (strain PC1).